The sequence spans 674 residues: Probable copper-transporting P-type ATPase B (674 aa).

The tract at residues 1–22 (MNHSNQMHHDNHASHDHHSGHA) is disordered. Residues 7–19 (MHHDNHASHDHHS) are compositionally biased toward basic and acidic residues. Transmembrane regions (helical) follow at residues 32 to 52 (FFVS…MGVN), 57 to 77 (FTFP…FFYG), 95 to 115 (GMMT…LYAF), 127 to 147 (TMDF…GHWI), 284 to 304 (GYLF…WMLI), and 315 to 335 (LVTV…PLVT). The 4-aspartylphosphate intermediate role is filled by Asp367. Residues Asp565 and Asp569 each contribute to the Mg(2+) site. Helical transmembrane passes span 623–645 (LWWG…AFIG) and 649–671 (SPAI…AFTL).

Belongs to the cation transport ATPase (P-type) (TC 3.A.3) family. Type IB subfamily.

The protein localises to the cell membrane. The enzyme catalyses Cu(+)(in) + ATP + H2O = Cu(+)(out) + ADP + phosphate + H(+). Involved in copper transport. This chain is Probable copper-transporting P-type ATPase B (copB), found in Staphylococcus aureus (strain USA300 / TCH1516).